The chain runs to 128 residues: Small ribosomal subunit protein bS6 (128 aa).

The tract at residues 105–128 is disordered; sequence AKVTEEEPVEAAPEAKVETTTEEE. The span at 117–128 shows a compositional bias: basic and acidic residues; the sequence is PEAKVETTTEEE.

It belongs to the bacterial ribosomal protein bS6 family.

Its function is as follows. Binds together with bS18 to 16S ribosomal RNA. The polypeptide is Small ribosomal subunit protein bS6 (Geotalea daltonii (strain DSM 22248 / JCM 15807 / FRC-32) (Geobacter daltonii)).